The sequence spans 189 residues: dCTP deaminase (189 aa).

Residues 112-117 (KSTYAR), 136-138 (TLE), glutamine 157, tyrosine 171, and glutamine 181 each bind dCTP. Glutamate 138 (proton donor/acceptor) is an active-site residue.

It belongs to the dCTP deaminase family. As to quaternary structure, homotrimer.

The catalysed reaction is dCTP + H2O + H(+) = dUTP + NH4(+). Its pathway is pyrimidine metabolism; dUMP biosynthesis; dUMP from dCTP (dUTP route): step 1/2. Catalyzes the deamination of dCTP to dUTP. In Leptothrix cholodnii (strain ATCC 51168 / LMG 8142 / SP-6) (Leptothrix discophora (strain SP-6)), this protein is dCTP deaminase.